The sequence spans 103 residues: Small ribosomal subunit protein uS10 (103 aa).

This sequence belongs to the universal ribosomal protein uS10 family. As to quaternary structure, part of the 30S ribosomal subunit.

Functionally, involved in the binding of tRNA to the ribosomes. The sequence is that of Small ribosomal subunit protein uS10 from Burkholderia mallei (strain NCTC 10247).